Here is a 663-residue protein sequence, read N- to C-terminus: Forkhead protein sep1 (663 aa).

The fork-head DNA-binding region spans 128-222 (KPPYSYAMLI…LKLKLRKPGV (95 aa)). 2 disordered regions span residues 220–241 (PGVNSRPAPPVQDVTSSTKYGS) and 325–387 (SPLQ…DVET). Over residues 340–355 (SPASSASPSESLRNES) the composition is skewed to low complexity. Ser-446 bears the Phosphoserine mark.

It is found in the nucleus. Its function is as follows. Required for promoter sequence element PCB-driven, M-phase-specific transcription. Acts as a transcriptional activator with a role in the regulation of mitosis. Regulates septation and the periodic transcription of cdc15. This Schizosaccharomyces pombe (strain 972 / ATCC 24843) (Fission yeast) protein is Forkhead protein sep1 (sep1).